The primary structure comprises 557 residues: uncharacterized protein (557 aa).

A coiled-coil region spans residues 2–45 (NEDETSILNKKMEKIEVEMAEFERLGAEREKEAVERIVQEENQN). Disordered regions lie at residues 39-62 (VQEENQNPEVPSNDDASTDIKSRK), 101-127 (NRTYYKNSQGYRRKPKRDDYNNNRKNF), 356-402 (PSPS…YPSN), and 536-557 (ANATSQPLSNLDTGGSAPYDHI). Polar residues-rich tracts occupy residues 101-110 (NRTYYKNSQG), 358-380 (PSFQEEFPSTSKSPSATPGSSNA), 390-400 (DSATYPTSIYP), and 536-548 (ANATSQPLSNLDT).

It localises to the cytoplasm. It is found in the nucleus. This is an uncharacterized protein from Schizosaccharomyces pombe (strain 972 / ATCC 24843) (Fission yeast).